Here is a 265-residue protein sequence, read N- to C-terminus: Glutamate racemase (265 aa).

Residues 12–13 (DS) and 44–45 (YG) contribute to the substrate site. Catalysis depends on Cys-75, which acts as the Proton donor/acceptor. A substrate-binding site is contributed by 76-77 (NT). Cys-186 acts as the Proton donor/acceptor in catalysis. 187–188 (TH) provides a ligand contact to substrate.

It belongs to the aspartate/glutamate racemases family.

The enzyme catalyses L-glutamate = D-glutamate. It participates in cell wall biogenesis; peptidoglycan biosynthesis. Functionally, provides the (R)-glutamate required for cell wall biosynthesis. This is Glutamate racemase from Pseudomonas aeruginosa (strain ATCC 15692 / DSM 22644 / CIP 104116 / JCM 14847 / LMG 12228 / 1C / PRS 101 / PAO1).